The sequence spans 197 residues: Protein RmlC homolog (197 aa).

His76 functions as the Proton acceptor in the catalytic mechanism. The Proton donor role is filled by Tyr140.

In terms of biological role, could catalyze a 3,5-epimerization. The polypeptide is Protein RmlC homolog (rfbC) (Streptococcus pyogenes serotype M6 (strain ATCC BAA-946 / MGAS10394)).